Here is a 250-residue protein sequence, read N- to C-terminus: 1-(5-phosphoribosyl)-5-[(5-phosphoribosylamino)methylideneamino] imidazole-4-carboxamide isomerase (250 aa).

Asp7 functions as the Proton acceptor in the catalytic mechanism. Asp129 functions as the Proton donor in the catalytic mechanism.

Belongs to the HisA/HisF family.

It localises to the cytoplasm. It catalyses the reaction 1-(5-phospho-beta-D-ribosyl)-5-[(5-phospho-beta-D-ribosylamino)methylideneamino]imidazole-4-carboxamide = 5-[(5-phospho-1-deoxy-D-ribulos-1-ylimino)methylamino]-1-(5-phospho-beta-D-ribosyl)imidazole-4-carboxamide. It participates in amino-acid biosynthesis; L-histidine biosynthesis; L-histidine from 5-phospho-alpha-D-ribose 1-diphosphate: step 4/9. The polypeptide is 1-(5-phosphoribosyl)-5-[(5-phosphoribosylamino)methylideneamino] imidazole-4-carboxamide isomerase (Shewanella denitrificans (strain OS217 / ATCC BAA-1090 / DSM 15013)).